A 197-amino-acid chain; its full sequence is ATP-dependent Clp protease proteolytic subunit 2 (197 aa).

S96 (nucleophile) is an active-site residue. H121 is a catalytic residue.

The protein belongs to the peptidase S14 family. In terms of assembly, fourteen ClpP subunits assemble into 2 heptameric rings which stack back to back to give a disk-like structure with a central cavity, resembling the structure of eukaryotic proteasomes.

The protein resides in the cytoplasm. The catalysed reaction is Hydrolysis of proteins to small peptides in the presence of ATP and magnesium. alpha-casein is the usual test substrate. In the absence of ATP, only oligopeptides shorter than five residues are hydrolyzed (such as succinyl-Leu-Tyr-|-NHMec, and Leu-Tyr-Leu-|-Tyr-Trp, in which cleavage of the -Tyr-|-Leu- and -Tyr-|-Trp bonds also occurs).. Functionally, cleaves peptides in various proteins in a process that requires ATP hydrolysis. Has a chymotrypsin-like activity. Plays a major role in the degradation of misfolded proteins. The chain is ATP-dependent Clp protease proteolytic subunit 2 from Synechococcus sp. (strain CC9605).